We begin with the raw amino-acid sequence, 539 residues long: Chaperonin GroEL (539 aa).

Residues 30–33, Lys51, 87–91, Gly415, and Asp495 each bind ATP; these read TLGP and DGTTT.

The protein belongs to the chaperonin (HSP60) family. As to quaternary structure, forms a cylinder of 14 subunits composed of two heptameric rings stacked back-to-back. Interacts with the co-chaperonin GroES.

It localises to the cytoplasm. The enzyme catalyses ATP + H2O + a folded polypeptide = ADP + phosphate + an unfolded polypeptide.. Its function is as follows. Together with its co-chaperonin GroES, plays an essential role in assisting protein folding. The GroEL-GroES system forms a nano-cage that allows encapsulation of the non-native substrate proteins and provides a physical environment optimized to promote and accelerate protein folding. The protein is Chaperonin GroEL of Serratia rubidaea (Serratia marinorubra).